We begin with the raw amino-acid sequence, 79 residues long: Putative membrane protein insertion efficiency factor (79 aa).

This sequence belongs to the UPF0161 family.

The protein localises to the cell inner membrane. Could be involved in insertion of integral membrane proteins into the membrane. The chain is Putative membrane protein insertion efficiency factor from Bacteroides thetaiotaomicron (strain ATCC 29148 / DSM 2079 / JCM 5827 / CCUG 10774 / NCTC 10582 / VPI-5482 / E50).